A 328-amino-acid polypeptide reads, in one-letter code: D-alanine--D-alanine ligase (328 aa).

The 200-residue stretch at 118 to 317 (LSVLTKFNIP…MPQMLDNEIT (200 aa)) folds into the ATP-grasp domain. 146–201 (KKALGLPFFVKPNQSGSSLGVSKVDALDQLEKALEFAFAEDNEILIESYLNGTEVS) is an ATP binding site. Asp-272, Glu-284, and Asn-286 together coordinate Mg(2+).

It belongs to the D-alanine--D-alanine ligase family. Requires Mg(2+) as cofactor. The cofactor is Mn(2+).

It is found in the cytoplasm. The catalysed reaction is 2 D-alanine + ATP = D-alanyl-D-alanine + ADP + phosphate + H(+). It participates in cell wall biogenesis; peptidoglycan biosynthesis. Functionally, cell wall formation. The sequence is that of D-alanine--D-alanine ligase from Flavobacterium psychrophilum (strain ATCC 49511 / DSM 21280 / CIP 103535 / JIP02/86).